The chain runs to 152 residues: Deoxyuridine 5'-triphosphate nucleotidohydrolase (152 aa).

Substrate contacts are provided by residues 71-73 (RSG), asparagine 84, 88-90 (LVD), and methionine 98.

It belongs to the dUTPase family. The cofactor is Mg(2+).

It catalyses the reaction dUTP + H2O = dUMP + diphosphate + H(+). It functions in the pathway pyrimidine metabolism; dUMP biosynthesis; dUMP from dCTP (dUTP route): step 2/2. In terms of biological role, this enzyme is involved in nucleotide metabolism: it produces dUMP, the immediate precursor of thymidine nucleotides and it decreases the intracellular concentration of dUTP so that uracil cannot be incorporated into DNA. This is Deoxyuridine 5'-triphosphate nucleotidohydrolase from Shewanella oneidensis (strain ATCC 700550 / JCM 31522 / CIP 106686 / LMG 19005 / NCIMB 14063 / MR-1).